Here is a 245-residue protein sequence, read N- to C-terminus: Uridylate kinase (245 aa).

15-18 (KLSG) lines the ATP pocket. The interval 23 to 28 (GEEGFG) is involved in allosteric activation by GTP. Gly57 contacts UMP. Residues Gly58 and Arg62 each contribute to the ATP site. UMP is bound by residues Asp77 and 138–145 (TGNPFCTT). ATP is bound by residues Thr165, Tyr171, and Asp174.

Belongs to the UMP kinase family. As to quaternary structure, homohexamer.

It localises to the cytoplasm. It carries out the reaction UMP + ATP = UDP + ADP. It participates in pyrimidine metabolism; CTP biosynthesis via de novo pathway; UDP from UMP (UMPK route): step 1/1. Its activity is regulated as follows. Allosterically activated by GTP. Inhibited by UTP. Catalyzes the reversible phosphorylation of UMP to UDP. In Shewanella putrefaciens (strain CN-32 / ATCC BAA-453), this protein is Uridylate kinase.